The chain runs to 159 residues: Small ribosomal subunit protein uS7 (159 aa).

This sequence belongs to the universal ribosomal protein uS7 family. Part of the 30S ribosomal subunit. Contacts proteins S9 and S11.

In terms of biological role, one of the primary rRNA binding proteins, it binds directly to 16S rRNA where it nucleates assembly of the head domain of the 30S subunit. Is located at the subunit interface close to the decoding center, probably blocks exit of the E-site tRNA. The polypeptide is Small ribosomal subunit protein uS7 (Wolbachia pipientis wMel).